The following is a 331-amino-acid chain: Putative heat stress transcription factor A-6a (331 aa).

A disordered region spans residues 135–160 (RRGAGTGSTTPRAVNCGGGGGEGEVE). Positions 156-238 (EGEVERLRRD…VERKKRRMLA (83 aa)) form a coiled coil. The hydrophobic repeat HR-A/B stretch occupies residues 162 to 212 (LRRDKEALARELARLRRQQQEARAQLLDMERRVRGTERRQEQCTEFLARAL). Positions 230–235 (ERKKRR) match the Nuclear localization signal motif. Positions 246–253 (LTFEALAL) match the Nuclear export signal motif. The AHA1 motif lies at 270 to 279 (DMIWYELLGE). The AHA2 signature appears at 305–313 (AEPWEEMGE).

The protein belongs to the HSF family. Class A subfamily. As to quaternary structure, homotrimer. In terms of processing, exhibits temperature-dependent phosphorylation.

It is found in the cytoplasm. Its subcellular location is the nucleus. In terms of biological role, transcriptional regulator that specifically binds DNA of heat shock promoter elements (HSE). This is Putative heat stress transcription factor A-6a (HSFA6A) from Oryza sativa subsp. japonica (Rice).